A 201-amino-acid chain; its full sequence is uncharacterized protein (201 aa).

The span at 64–78 shows a compositional bias: acidic residues; that stretch reads DNEIKEEEESEEEEK. Disordered stretches follow at residues 64–114 and 182–201; these read DNEI…FKNA and ILPG…LSKQ. Residues 96 to 106 show a composition bias toward basic residues; the sequence is RNKHGRNRNPR. The span at 189 to 201 shows a compositional bias: polar residues; sequence GNTETVDQGLSKQ.

This is an uncharacterized protein from Ostreid herpesvirus 1 (isolate France) (OsHV-1).